The sequence spans 205 residues: MSTKKRRVLKIIILGDSGVGKTSLMNQYVQKKFTKEYKATIGADFLTKEIEVDDKKVTMQIWDTAGQERFQSLGSAFYRGADCCMLVFDVNNAKSFDDLDNWRDEFIIQAGPSDPDNFPFVVLGNKIDEVGVNRQVTEKKAKAWCASKGSIPYFETSAKEDINVEAAFTCITRNALRNEKEEELFVPDAVDMNTSATQRKRGGCC.

15–22 contacts GTP; that stretch reads GDSGVGKT. Residues 37–45 carry the Effector region motif; that stretch reads YKATIGADF. GTP-binding positions include 63-67 and 125-128; these read DTAGQ and NKID. 2 S-geranylgeranyl cysteine lipidation sites follow: C204 and C205.

Belongs to the small GTPase superfamily. Rab family.

The protein resides in the cell membrane. In terms of biological role, protein transport. Probably involved in vesicular traffic. The sequence is that of GTP-binding protein yptV5 (YPTV5) from Volvox carteri (Green alga).